The chain runs to 200 residues: Small ribosomal subunit protein uS4 (200 aa).

The segment at 22–43 is disordered; it reads TGKELERRPYAPGQHGPTQRKK. Positions 92 to 170 constitute an S4 RNA-binding domain; sequence QRLDNIVYRL…VPEYVTFDAE (79 aa).

The protein belongs to the universal ribosomal protein uS4 family. As to quaternary structure, part of the 30S ribosomal subunit. Contacts protein S5. The interaction surface between S4 and S5 is involved in control of translational fidelity.

One of the primary rRNA binding proteins, it binds directly to 16S rRNA where it nucleates assembly of the body of the 30S subunit. Its function is as follows. With S5 and S12 plays an important role in translational accuracy. The polypeptide is Small ribosomal subunit protein uS4 (Listeria monocytogenes serotype 4b (strain F2365)).